A 196-amino-acid polypeptide reads, in one-letter code: MLERIKVCFTESIQTQIAAAEALPDAISRAALTVVQSLLNGNKILSCGNGTSSANAQHFAASMINRFETERPSLPAIALSADNVLLTAIGNDRLHEEIYAKQVRALGHTGDILLAISTRGNSRDIVKAVEAAVTRDMTIVALTGHDGGELAGLLGPQDVEIRIPSHRSARIQEMHMLTVNCLCDLIDNTLFPHQEV.

Positions 34–196 (VVQSLLNGNK…DNTLFPHQEV (163 aa)) constitute an SIS domain.

This sequence belongs to the SIS family. DiaA subfamily. In terms of assembly, homotetramer; dimer of dimers.

Required for the timely initiation of chromosomal replication via direct interactions with the DnaA initiator protein. This chain is DnaA initiator-associating protein DiaA, found in Erwinia tasmaniensis (strain DSM 17950 / CFBP 7177 / CIP 109463 / NCPPB 4357 / Et1/99).